Here is a 235-residue protein sequence, read N- to C-terminus: Large ribosomal subunit protein uL1 (235 aa).

Belongs to the universal ribosomal protein uL1 family. In terms of assembly, part of the 50S ribosomal subunit.

In terms of biological role, binds directly to 23S rRNA. The L1 stalk is quite mobile in the ribosome, and is involved in E site tRNA release. Its function is as follows. Protein L1 is also a translational repressor protein, it controls the translation of the L11 operon by binding to its mRNA. This chain is Large ribosomal subunit protein uL1, found in Rhodospirillum centenum (strain ATCC 51521 / SW).